We begin with the raw amino-acid sequence, 66 residues long: uncharacterized protein (66 aa).

Residues 1–25 (MIVIILLFISIIVFLSVIQPQPSKN) form the signal peptide. Over residues 21 to 31 (QPSKNKSRQQA) the composition is skewed to polar residues. The segment at 21 to 66 (QPSKNKSRQQADSGYFGYSDHSSHHDGCSSDGGFSDSGCGGGGGGD) is disordered.

This is an uncharacterized protein from Bacillus subtilis (strain 168).